A 131-amino-acid chain; its full sequence is uncharacterized protein (131 aa).

2 consecutive transmembrane segments (helical) span residues 5–25 (VQPI…YVLV) and 34–54 (MAVT…YVMN). Residues 62 to 131 (AAFKKAAKQS…KNKKKNRALF (70 aa)) are disordered. 2 stretches are compositionally biased toward basic residues: residues 66–92 (KAAK…RVSH) and 122–131 (KNKKKNRALF).

The protein localises to the cell membrane. This is an uncharacterized protein from Bacillus subtilis (strain 168).